We begin with the raw amino-acid sequence, 642 residues long: Epithelial sodium channel subunit alpha (642 aa).

The Cytoplasmic portion of the chain corresponds to 1-81 (MHQVVTVKAE…VCSKRNKMKT (81 aa)). The helical transmembrane segment at 82–102 (AFWSVLFFLTFGLMYWQFGIL) threads the bilayer. Over 103 to 553 (YREYFSFPVN…NQWSLWFGSS (451 aa)) the chain is Extracellular. 10 disulfides stabilise this stretch: Cys-130–Cys-297, Cys-222–Cys-229, Cys-274–Cys-281, Cys-385–Cys-470, Cys-407–Cys-447, Cys-407–Cys-466, Cys-411–Cys-462, Cys-420–Cys-447, Cys-420–Cys-470, and Cys-422–Cys-436. Positions 170-209 (GAAQSSQKRSQRSLSHHVQRHPLRRRKRNEPVSLKGNSPP) are disordered. Positions 178–197 (RSQRSLSHHVQRHPLRRRKR) are enriched in basic residues. A helical membrane pass occupies residues 554–574 (VLSVVELAELILDFIAITIIL). Over 575–642 (SFKRFRSRQV…RDGEAVIGLE (68 aa)) the chain is Cytoplasmic. The interval 587–608 (PSVPPPGAHDNTAFQSEPADPS) is disordered.

This sequence belongs to the amiloride-sensitive sodium channel (TC 1.A.6) family. SCNN1A subfamily. As to quaternary structure, heterotrimer; disulfide-linked and containing an alpha/SCNN1A, a beta/SCNN1B and a gamma/SCNN1G subunit.

It localises to the apical cell membrane. It is found in the cell projection. The protein localises to the cilium. Its subcellular location is the cytoplasmic granule. The protein resides in the cytoplasm. It localises to the cytoplasmic vesicle. It is found in the secretory vesicle. The protein localises to the acrosome. Its subcellular location is the flagellum. The catalysed reaction is Na(+)(in) = Na(+)(out). With respect to regulation, originally identified and characterized by its inhibition by the diuretic drug amiloride. Its function is as follows. This is one of the three pore-forming subunits of the heterotrimeric epithelial sodium channel (ENaC), a critical regulator of sodium balance and fluid homeostasis. ENaC operates in epithelial tissues, where it mediates the electrodiffusion of sodium ions from extracellular fluid through the apical membrane of cells, with water following osmotically. In Pelodiscus sinensis (Chinese softshell turtle), this protein is Epithelial sodium channel subunit alpha.